A 545-amino-acid polypeptide reads, in one-letter code: MTRLVLCPGSRSGPLAAAAGLLAARGDLALTTAIDERSAAFLALGMATAGGRAVAVVTTSGTAVANLLPAAVEADRSTQPLLLLTADRPARLKNCGANQTVNQEQFLQPVCRWLGHGAPEGLASQPPQALFDLAHEAWRHCHGRPPGPVQLNLPFEEPLHGAPEDQLSLQVSGLQRSAPAPSSDSPLGAAPQLDPNQAGVVVAGPWRGLAPALPAYQQALLQWLARSGWPLLADPLAAIPADCPGQLDGWELQLDRLQLAPGSPVLRLGPLPASRRLEAWLQRQTGPQLLISEGEPRGLDPLGLADQWSGGLAAWWAEQNQDFPGASTPEQLMPQSGIASLLRQRLPLQGAVNEPALAHWLPLLLPPQLPVMLAASSPVRDWLIWGGLQAQNRRCFSFRGASGIDGTLSLAMGLAMEQGPMVLVTGDLALLHDSNGWLHGAQGNPPLLVLLIDNQGGGIFQQLPIQSKQFDRLFAMPQRVNPLALAAAHGIDGRQVACLEDLPEALEWGLAQGRPALLRLATDREADARLRTQLRSAAQNAEPLL.

The segment covering 170–185 (QVSGLQRSAPAPSSDS) has biased composition (polar residues). A disordered region spans residues 170 to 193 (QVSGLQRSAPAPSSDSPLGAAPQL).

It belongs to the TPP enzyme family. MenD subfamily. As to quaternary structure, homodimer. It depends on Mg(2+) as a cofactor. Requires Mn(2+) as cofactor. Thiamine diphosphate serves as cofactor.

The enzyme catalyses isochorismate + 2-oxoglutarate + H(+) = 5-enolpyruvoyl-6-hydroxy-2-succinyl-cyclohex-3-ene-1-carboxylate + CO2. It functions in the pathway quinol/quinone metabolism; 1,4-dihydroxy-2-naphthoate biosynthesis; 1,4-dihydroxy-2-naphthoate from chorismate: step 2/7. The protein operates within cofactor biosynthesis; phylloquinone biosynthesis. Its function is as follows. Catalyzes the thiamine diphosphate-dependent decarboxylation of 2-oxoglutarate and the subsequent addition of the resulting succinic semialdehyde-thiamine pyrophosphate anion to isochorismate to yield 2-succinyl-5-enolpyruvyl-6-hydroxy-3-cyclohexene-1-carboxylate (SEPHCHC). The chain is 2-succinyl-5-enolpyruvyl-6-hydroxy-3-cyclohexene-1-carboxylate synthase from Parasynechococcus marenigrum (strain WH8102).